The sequence spans 416 residues: Probable F-box protein At5g47300 (416 aa).

The region spanning threonine 40–histidine 86 is the F-box domain.

The polypeptide is Probable F-box protein At5g47300 (Arabidopsis thaliana (Mouse-ear cress)).